Here is a 217-residue protein sequence, read N- to C-terminus: Protein GrpE (217 aa).

The segment covering 1-10 (MSDHAEHAAD) has biased composition (basic and acidic residues). Residues 1-39 (MSDHAEHAADAADTDAPEGDDAGGDDGEQAGDDGTSALS) form a disordered region. A compositionally biased stretch (acidic residues) spans 12–31 (ADTDAPEGDDAGGDDGEQAG).

It belongs to the GrpE family. In terms of assembly, homodimer.

The protein resides in the cytoplasm. Functionally, participates actively in the response to hyperosmotic and heat shock by preventing the aggregation of stress-denatured proteins, in association with DnaK and GrpE. It is the nucleotide exchange factor for DnaK and may function as a thermosensor. Unfolded proteins bind initially to DnaJ; upon interaction with the DnaJ-bound protein, DnaK hydrolyzes its bound ATP, resulting in the formation of a stable complex. GrpE releases ADP from DnaK; ATP binding to DnaK triggers the release of the substrate protein, thus completing the reaction cycle. Several rounds of ATP-dependent interactions between DnaJ, DnaK and GrpE are required for fully efficient folding. The protein is Protein GrpE of Halobacterium salinarum (strain ATCC 29341 / DSM 671 / R1).